The following is a 166-amino-acid chain: Small ribosomal subunit protein uS5 (166 aa).

The S5 DRBM domain maps to 11–74; that stretch reads LIDKVVHISR…ESAKRTMFEV (64 aa).

This sequence belongs to the universal ribosomal protein uS5 family. Part of the 30S ribosomal subunit. Contacts proteins S4 and S8.

With S4 and S12 plays an important role in translational accuracy. In terms of biological role, located at the back of the 30S subunit body where it stabilizes the conformation of the head with respect to the body. The sequence is that of Small ribosomal subunit protein uS5 from Syntrophobacter fumaroxidans (strain DSM 10017 / MPOB).